Consider the following 456-residue polypeptide: Solute carrier family 49 member 4 homolog (456 aa).

At 1–29 (MGLEWSSPGERQPLLFPGGPRSPRVFGRR) the chain is on the cytoplasmic side. Positions 14–15 (LL) match the Di-leucine motif; mediates lysosomal localization motif. A helical transmembrane segment spans residues 30-50 (WLVLLLFSVLAFLQGLVWNSW). At 51–67 (GPIQISARTAYKFSGLD) the chain is on the lumenal side. Residues 68–88 (IALLVLWGPIGFLPCFLFMWL) form a helical membrane-spanning segment. Topologically, residues 89-95 (MDNRGLR) are cytoplasmic. A helical transmembrane segment spans residues 96–116 (ITVLLTALLMVLGAGLRCVPV). Topologically, residues 117–123 (EDLAIRR) are lumenal. The helical transmembrane segment at 124–144 (ILIHGGQLLNGFAGPTVMNAA) threads the bilayer. The Cytoplasmic segment spans residues 145-162 (PFLSTTWFAPDERATATA). Residues 163–183 (IASMLNYLGGACAFLVGPLVV) form a helical membrane-spanning segment. The Lumenal segment spans residues 184–207 (PAPNSTSGLLLYSGSTDAIKDRIE). N-linked (GlcNAc...) asparagine glycosylation is present at asparagine 187. A helical membrane pass occupies residues 208–228 (AVMYAEFGIIFVVFAAILAYF). Residues 229 to 259 (PARPPVPPSVAAASRRLSYRTSIFRLLSNLR) are Cytoplasmic-facing. The helical transmembrane segment at 260–280 (FLLIVLAYAIPLGFYSGWIGV) threads the bilayer. The Lumenal segment spans residues 281–292 (LDLILTPVHVTQ). Residues 293–313 (VDAGWVGFWSIVGGCVVGIAV) traverse the membrane as a helical segment. Residues 314 to 326 (GRFADSIRGVLKP) lie on the Cytoplasmic side of the membrane. Residues 327–347 (ILLLLFSGATLSATWFTLTFL) form a helical membrane-spanning segment. The Lumenal portion of the chain corresponds to 348-362 (SNVTHLPLTTATLYT). N-linked (GlcNAc...) asparagine glycosylation is present at asparagine 349. The helical transmembrane segment at 363–383 (SCILIGVFLNGTVPIFFELFV) threads the bilayer. Residues 384–392 (ETVYPIPEG) lie on the Cytoplasmic side of the membrane. The chain crosses the membrane as a helical span at residues 393-413 (IACGVVTFLSNIFMGVLLVFL). Over 414–420 (TMYQMEL) the chain is Lumenal. The chain crosses the membrane as a helical span at residues 421 to 441 (SWLNWCLTGSCFLSLFFIACF). Residues 442–456 (RESYDRLYLDVFVSV) lie on the Cytoplasmic side of the membrane.

It belongs to the major facilitator superfamily.

It localises to the lysosome membrane. The enzyme catalyses pyridoxine(out) + n H(+)(out) = pyridoxine(in) + n H(+)(in). Functionally, mediates H(+)-dependent pyridoxine transport. In Xenopus laevis (African clawed frog), this protein is Solute carrier family 49 member 4 homolog (slc49a4).